A 329-amino-acid chain; its full sequence is UDP-2,3-diacylglucosamine pyrophosphatase LpxG (329 aa).

Residues 2–24 (FVFVGSTVSLTAIVAAPVLTWIW) form a helical membrane-spanning segment. Positions 59, 61, 91, 123, 257, and 259 each coordinate a divalent metal cation.

The protein belongs to the metallophosphoesterase superfamily. Mn(2+) serves as cofactor.

Its subcellular location is the cell inner membrane. The enzyme catalyses UDP-2,3-diacyl-alpha-D-glucosamine + H2O = 2,3-diacyl-alpha-D-glucosaminyl 1-phosphate + UMP + 2 H(+). It participates in glycolipid biosynthesis; lipid IV(A) biosynthesis. In terms of biological role, hydrolyzes the pyrophosphate bond of UDP-2,3-diacylglucosamine to form 2,3-diacylglucosamine 1-phosphate (lipid X) and UMP by catalyzing the attack of water at the alpha-P atom. Involved in the biosynthesis of lipid A, a phosphorylated glycolipid that anchors the lipooligosaccharide (LOS) to the outer membrane of the cell. The protein is UDP-2,3-diacylglucosamine pyrophosphatase LpxG of Chlamydia muridarum (strain MoPn / Nigg).